A 290-amino-acid polypeptide reads, in one-letter code: Acetyl-coenzyme A carboxylase carboxyl transferase subunit beta (290 aa).

A CoA carboxyltransferase N-terminal domain is found at 28–290; that stretch reads VMTKCPQCKK…GGGESGWWRN (263 aa). Zn(2+) is bound by residues cysteine 32, cysteine 35, cysteine 51, and cysteine 54. The segment at 32–54 adopts a C4-type zinc-finger fold; that stretch reads CPQCKKIMYTKELVKNLRVCLSC.

This sequence belongs to the AccD/PCCB family. In terms of assembly, acetyl-CoA carboxylase is a heterohexamer composed of biotin carboxyl carrier protein (AccB), biotin carboxylase (AccC) and two subunits each of ACCase subunit alpha (AccA) and ACCase subunit beta (AccD). Zn(2+) serves as cofactor.

The protein localises to the cytoplasm. It carries out the reaction N(6)-carboxybiotinyl-L-lysyl-[protein] + acetyl-CoA = N(6)-biotinyl-L-lysyl-[protein] + malonyl-CoA. The protein operates within lipid metabolism; malonyl-CoA biosynthesis; malonyl-CoA from acetyl-CoA: step 1/1. Its function is as follows. Component of the acetyl coenzyme A carboxylase (ACC) complex. Biotin carboxylase (BC) catalyzes the carboxylation of biotin on its carrier protein (BCCP) and then the CO(2) group is transferred by the transcarboxylase to acetyl-CoA to form malonyl-CoA. The protein is Acetyl-coenzyme A carboxylase carboxyl transferase subunit beta of Geobacillus thermodenitrificans (strain NG80-2).